Consider the following 69-residue polypeptide: MKTHYFLLVMLFFLFSQMELGAGILTSLGRRTDQYRCLQNGGFCLRSSCPSHTKLQGTCKPDKPNCCRS.

The N-terminal stretch at Met1 to Gly21 is a signal peptide. The propeptide occupies Ala22–Thr32. Disulfide bonds link Cys37-Cys66, Cys44-Cys59, and Cys49-Cys67.

Belongs to the beta-defensin family. Monomer. Homodimer. Highly expressed in kidney.

It is found in the secreted. It localises to the membrane. Its function is as follows. Has bactericidal activity. May act as a ligand for C-C chemokine receptor CCR6. Positively regulates the sperm motility and bactericidal activity in a CCR6-dependent manner. Binds to CCR6 and triggers Ca2+ mobilization in the sperm which is important for its motility. This chain is Beta-defensin 1 (Defb1), found in Rattus norvegicus (Rat).